The following is a 305-amino-acid chain: Oligopeptide transport system permease protein OppC (305 aa).

The next 6 membrane-spanning stretches (helical) occupy residues 43 to 63, 105 to 125, 166 to 185, 212 to 232, 236 to 256, and 274 to 294; these read AMVGLIIIVLIILMAIFAPMF, ISIFIGVAAAVLDLLIGVIWG, LFTIIIAMTITGWINMARIV, LFKHIVPNAMGSILVTMTLTV, IFTEAFLSYLGLGVPAPLASW, and LFFPAGFICITMFGFNVVGDG. Positions 103–292 constitute an ABC transmembrane type-1 domain; the sequence is ARISIFIGVA…ITMFGFNVVG (190 aa).

The protein belongs to the binding-protein-dependent transport system permease family. OppBC subfamily. In terms of assembly, the complex is composed of two ATP-binding proteins (OppD and OppF), two transmembrane proteins (OppB and OppC) and a solute-binding protein (OppA).

It is found in the cell membrane. Part of the ABC transporter complex OppABCDF involved in the uptake of oligopeptides. Probably responsible for the translocation of the substrate across the membrane. Required for sporulation and genetic competence. This chain is Oligopeptide transport system permease protein OppC, found in Bacillus subtilis (strain 168).